A 218-amino-acid chain; its full sequence is Cytochrome b6 (218 aa).

A helical transmembrane segment spans residues 35–55; it reads IFYCLGGITLVCFLIQFATGF. Cys-38 serves as a coordination point for heme c. 2 residues coordinate heme b: His-89 and His-103. A run of 3 helical transmembrane segments spans residues 93–113, 119–139, and 189–209; these read ASMMVLMLILHVFRVYLTGGF, LTWVTGVVMAVITVAFGVTGY, and LHTFVLPWTLAIFMLMHFLMI. Heme b is bound by residues His-190 and His-205.

Belongs to the cytochrome b family. PetB subfamily. The 4 large subunits of the cytochrome b6-f complex are cytochrome b6, subunit IV (17 kDa polypeptide, PetD), cytochrome f and the Rieske protein, while the 4 small subunits are PetG, PetL, PetM and PetN. The complex functions as a dimer. Requires heme b as cofactor. Heme c is required as a cofactor.

It is found in the cellular thylakoid membrane. Its function is as follows. Component of the cytochrome b6-f complex, which mediates electron transfer between photosystem II (PSII) and photosystem I (PSI), cyclic electron flow around PSI, and state transitions. The protein is Cytochrome b6 of Prochlorococcus marinus (strain SARG / CCMP1375 / SS120).